The primary structure comprises 201 residues: Lipopolysaccharide core heptose(II)-phosphate phosphatase (201 aa).

The first 35 residues, 1–35 (MLAFTLRFIKNKRYLATLAGALVIIAGLTSQHAWS), serve as a signal peptide directing secretion.

This sequence belongs to the phosphoglycerate mutase family. Ais subfamily.

It localises to the periplasm. It functions in the pathway bacterial outer membrane biogenesis; lipopolysaccharide metabolism. Catalyzes the dephosphorylation of heptose(II) of the outer membrane lipopolysaccharide core. In Salmonella paratyphi A (strain AKU_12601), this protein is Lipopolysaccharide core heptose(II)-phosphate phosphatase.